The sequence spans 121 residues: C-X-C motif chemokine 11-6 (121 aa).

A signal peptide spans 1–20; the sequence is MKTLAAFLLLSCLIAGEVNG. Cystine bridges form between Cys-29-Cys-56 and Cys-31-Cys-73. A disordered region spans residues 95–121; the sequence is QSVPHSTTTGTVKSSMTSSTSAPTAFK. Residues 100-115 are compositionally biased toward low complexity; that stretch reads STTTGTVKSSMTSSTS.

This sequence belongs to the intercrine alpha (chemokine CxC) family.

It localises to the secreted. Ligand for cxcr3.2. Chemotactic for macrophages. The polypeptide is C-X-C motif chemokine 11-6 (Danio rerio (Zebrafish)).